We begin with the raw amino-acid sequence, 376 residues long: Beta sliding clamp (376 aa).

The protein belongs to the beta sliding clamp family. As to quaternary structure, forms a ring-shaped head-to-tail homodimer around DNA which binds and tethers DNA polymerases and other proteins to the DNA. The DNA replisome complex has a single clamp-loading complex (3 tau and 1 each of delta, delta', psi and chi subunits) which binds 3 Pol III cores (1 core on the leading strand and 2 on the lagging strand) each with a beta sliding clamp dimer. Additional proteins in the replisome are other copies of gamma, psi and chi, Ssb, DNA helicase and RNA primase.

The protein resides in the cytoplasm. Its function is as follows. Confers DNA tethering and processivity to DNA polymerases and other proteins. Acts as a clamp, forming a ring around DNA (a reaction catalyzed by the clamp-loading complex) which diffuses in an ATP-independent manner freely and bidirectionally along dsDNA. Initially characterized for its ability to contact the catalytic subunit of DNA polymerase III (Pol III), a complex, multichain enzyme responsible for most of the replicative synthesis in bacteria; Pol III exhibits 3'-5' exonuclease proofreading activity. The beta chain is required for initiation of replication as well as for processivity of DNA replication. The polypeptide is Beta sliding clamp (dnaN) (Streptomyces coelicolor (strain ATCC BAA-471 / A3(2) / M145)).